We begin with the raw amino-acid sequence, 87 residues long: Small ribosomal subunit protein uS15c (87 aa).

The protein belongs to the universal ribosomal protein uS15 family. Part of the 30S ribosomal subunit.

It localises to the plastid. It is found in the chloroplast. This Nymphaea alba (White water-lily) protein is Small ribosomal subunit protein uS15c (rps15).